A 758-amino-acid polypeptide reads, in one-letter code: 5-methyltetrahydropteroyltriglutamate--homocysteine methyltransferase (758 aa).

Residues 17 to 20 and Lys-110 each bind 5-methyltetrahydropteroyltri-L-glutamate; that span reads RELK. L-homocysteine contacts are provided by residues 428 to 430 and Glu-481; that span reads IGS. L-methionine-binding positions include 428-430 and Glu-481; that span reads IGS. Residues 512–513 and Trp-558 each bind 5-methyltetrahydropteroyltri-L-glutamate; that span reads RC. Asp-596 is a binding site for L-homocysteine. Asp-596 is a binding site for L-methionine. Glu-602 contributes to the 5-methyltetrahydropteroyltri-L-glutamate binding site. The Zn(2+) site is built by His-638, Cys-640, and Glu-662. Catalysis depends on His-691, which acts as the Proton donor. Cys-723 is a binding site for Zn(2+).

The protein belongs to the vitamin-B12 independent methionine synthase family. Zn(2+) serves as cofactor.

The enzyme catalyses 5-methyltetrahydropteroyltri-L-glutamate + L-homocysteine = tetrahydropteroyltri-L-glutamate + L-methionine. It functions in the pathway amino-acid biosynthesis; L-methionine biosynthesis via de novo pathway; L-methionine from L-homocysteine (MetE route): step 1/1. Catalyzes the transfer of a methyl group from 5-methyltetrahydrofolate to homocysteine resulting in methionine formation. The sequence is that of 5-methyltetrahydropteroyltriglutamate--homocysteine methyltransferase from Thermosynechococcus vestitus (strain NIES-2133 / IAM M-273 / BP-1).